Here is a 142-residue protein sequence, read N- to C-terminus: UPF0102 protein Bcen2424_0290 (142 aa).

A compositionally biased stretch (low complexity) spans 1–19 (MCHAAPARPEGARGRPPSG). Positions 1–27 (MCHAAPARPEGARGRPPSGDNFSGAAR) are disordered.

It belongs to the UPF0102 family.

This chain is UPF0102 protein Bcen2424_0290, found in Burkholderia cenocepacia (strain HI2424).